The sequence spans 822 residues: MTEYNSEAYLKKLDKWWRAATYLGAGMIFLKENPLFSVTGTPIKAENLKANPIGHWGTVSGQTFLYAHANRLINKYDQKMFYMGGPGHGGQAMVVPSYLDGSYTEAYPEITQDLEGMSRLFKRFSFPGGIGSHMTAQTPGSLHEGGELGYVLSHATGAILDQPEQIAFAVVGDGEAETGPLMTSWHSIKFINPKNDGAILPILDLNGFKISNPTLFARTSDVDIRKFFEGLGYSPRYIENDDIHDYMAYHKLAAEVFDKAIEDIHQIQKDAREDNRYQNGEIPAWPIVIARLPKGWGGPRYNDWSGPKFDGKGMPIEHSFRAHQVPLPLSSKNMGTLPEFVKWMTSYQPETLFNADGSLKEELRDFAPKGEMRMASNPVTNGGVDSSNLVLPDWQEFANPISENNRGKLLPDTNDNMDMNVLSKYFAEIVKLNPTRFRLFGPDETMSNRFWEMFKVTNRQWMQVIKNPNDEFISPEGRIIDSQLSEHQAEGWLEGYTLTGRTGAFASYESFLRVVDSMLTQHFKWIRQAADQKWRHDYPSLNVISTSTVFQQDHNGYTHQDPGMLTHLAEKKSDFIRQYLPADGNTLLAVFDRAFQDRSKINHIVASKQPRQQWFTKEEAEKLATDGIATIDWASTAKDGEAVDLVFASAGAEPTIETLAALHLVNEVFPQAKFRYVNVVELGRLQKKKGALNQERELSDEEFEKYFGPSGTPVIFGFHGYEDLIESIFYQRGHDGLIVHGYREDGDITTTYDMRVYSELDRFHQAIDAMQVLYVNRKVNQGLAKAFIDRMKRTLVKHFEVTRNEGVDIPDFTEWVWSDLKK.

Belongs to the XFP family. Requires thiamine diphosphate as cofactor.

The sequence is that of Probable phosphoketolase from Lactococcus lactis subsp. lactis (strain IL1403) (Streptococcus lactis).